A 333-amino-acid chain; its full sequence is Minor fimbrium tip subunit MfA4 (333 aa).

A signal peptide spans 1-18 (MKKYLLYASLLTSVLLFS). The N-palmitoyl cysteine moiety is linked to residue C19. C19 is lipidated: S-diacylglycerol cysteine. Residues 19–53 (CSKNNPSEPVEDRSIEISIRVDDFTKTGETVRYER) constitute a propeptide that is removed on maturation.

Belongs to the bacteroidetes fimbrillin superfamily. FimA/Mfa1 family. Component of the fimbrium tip. Minor fimbriae are composed of a structural subunit, most often Mfa1, and the accessory subunits Mfa3, Mfa4 and Mfa5. Mfa4 is required for Mfa3 and Mfa5 insertion into the fimbrium. Fimbrium assembly occurs by linear, head-to-tail oligomerization of fimbrial subunits. This is mediated via insertion of a C-terminal beta-strand from one subunit into a groove in the N-terminal domain of the following subunit.

The protein resides in the fimbrium. The protein localises to the cell outer membrane. Tip subunit of the minor fimbriae. These filamentous pili are attached to the cell surface; they mediate biofilm formation, adhesion onto host cells and onto other bacteria that are part of the oral microbiome. They play an important role in invasion of periodontal tissues and are recognized as major virulence factors. In Porphyromonas gingivalis (strain ATCC 33277 / DSM 20709 / CIP 103683 / JCM 12257 / NCTC 11834 / 2561), this protein is Minor fimbrium tip subunit MfA4.